We begin with the raw amino-acid sequence, 176 residues long: Cathelicidin-2 (176 aa).

The first 29 residues, 1-29 (METQGASLSLGRWSLWLLLLGLVVPLASA), serve as a signal peptide directing secretion. Gln-30 bears the Pyrrolidone carboxylic acid mark. Residues 30–130 (QALSYREAVL…DINCNELQSV (101 aa)) constitute a propeptide that is removed on maturation. Cystine bridges form between Cys-85-Cys-96 and Cys-107-Cys-124. A disordered region spans residues 135-176 (PIRRPPIRPPFNPPFRPPVRPPFRPPFRPPFRPPIGPFPGRR). A compositionally biased stretch (pro residues) spans 141–176 (IRPPFNPPFRPPVRPPFRPPFRPPFRPPIGPFPGRR). Residue Pro-173 is modified to Proline amide. A propeptide spans 174–176 (GRR) (removed in mature form).

The protein belongs to the cathelicidin family. In terms of processing, elastase is responsible for its maturation.

It localises to the secreted. Its function is as follows. Binds to the lipid A moiety of bacterial lipopolysaccharides (LPS), a glycolipid present in the outer membrane of all Gram-negative bacteria. Shows a potent antimicrobial activity against the Gram-negative bacteria E.coli, S.typhimurium and P.aeruginosa. Less active against the Gram-positive bacteria S.aureus, L.monocytogenes and B.subtilis. The chain is Cathelicidin-2 (CATHL2) from Capra hircus (Goat).